Here is a 335-residue protein sequence, read N- to C-terminus: uncharacterized protein (335 aa).

A signal peptide spans 1 to 21 (MDKKARAHTVIVCLVGALSLA). Residue cysteine 22 is the site of N-palmitoyl cysteine attachment. Cysteine 22 carries the S-diacylglycerol cysteine lipid modification.

Its subcellular location is the cell membrane. This is an uncharacterized protein from Treponema pallidum (strain Nichols).